The chain runs to 479 residues: Baeyer-Villiger monooxygenase AacuH (479 aa).

A disordered region spans residues 14–34 (DSLGHPDGASRPPVSAESLSR).

The protein belongs to the AflY oxidoreductase family.

It participates in secondary metabolite biosynthesis. Its function is as follows. Baeyer-Villiger monooxygenase; part of the gene cluster that mediates the biosynthesis of the tetrahydroxanthone dimer secalonic acid D. The pathway begins with the synthesis of atrochrysone thioester by the polyketide synthase AacuL. The atrochrysone carboxyl ACP thioesterase AacuM then breaks the thioester bond and releases the atrochrysone carboxylic acid from AacuL. Atrochrysone carboxylic acid is decarboxylated by the decarboxylase AacuI, and oxidized by the anthrone oxygenase AacuG to yield emodin. Emodin is then reduced to emodin hydroquinone by a yet unidentified oxidoreductase. A-ring reduction by the short chain dehydrogenase AacuN, dehydration by the scytalone dehydratase-like protein AacuK and probable spontaneous re-oxidation, results in overall deoxygenation to chrysophanol. Baeyer-Villiger oxidation by the Baeyer-Villiger monooxygenase (BVMO) AacuH then yields monodictyphenone. Monodictyphenone is transformed into compounds with the tetrahydroxanthone skeleton via methylesterification by the methyltransferase AacuQ, followed by the action of the flavin-dependent monooxygenase AacuC, the isomerase AacuP, and the short chain dehydrogenase/reductase AacuF or AacuD. AacuF and AacuD should accept the same compound as a substrate but perform the ketoreduction with a different stereoselectivity, thus yielding blennolides B and A, respectively. In the final step of the biosynthesis, the cytochrome P450 monooxygenase AacuE accepts blennolide B and/or blennolide A to conduct the dimerization reaction to furnish the tetrahydroxanthone dimers, secalonic acids D, B, and F. The chain is Baeyer-Villiger monooxygenase AacuH from Aspergillus aculeatus (strain ATCC 16872 / CBS 172.66 / WB 5094).